The sequence spans 657 residues: Probable alpha-galactosidase D (657 aa).

An N-terminal signal peptide occupies residues M1–G16. N47 and N91 each carry an N-linked (GlcNAc...) asparagine glycan. An intrachain disulfide couples C124 to C157. Residue D155 is the Nucleophile of the active site. Residues N182 and N191 are each glycosylated (N-linked (GlcNAc...) asparagine). E200–D204 is a substrate binding site. D222 serves as the catalytic Proton donor. 7 N-linked (GlcNAc...) asparagine glycosylation sites follow: N291, N438, N460, N505, N539, N543, and N582.

The protein belongs to the glycosyl hydrolase 27 family.

The protein resides in the secreted. The enzyme catalyses Hydrolysis of terminal, non-reducing alpha-D-galactose residues in alpha-D-galactosides, including galactose oligosaccharides, galactomannans and galactolipids.. Its function is as follows. Hydrolyzes a variety of simple alpha-D-galactoside as well as more complex molecules such as oligosaccharides and polysaccharides. The sequence is that of Probable alpha-galactosidase D (aglD) from Aspergillus oryzae (strain ATCC 42149 / RIB 40) (Yellow koji mold).